We begin with the raw amino-acid sequence, 322 residues long: Arginase (322 aa).

Histidine 113, aspartate 141, histidine 143, and aspartate 145 together coordinate Mn(2+). Residues 143–147 (HADIN), 154–156 (SGN), and aspartate 200 contribute to the substrate site. Residues aspartate 247 and aspartate 249 each coordinate Mn(2+). Substrate is bound by residues threonine 261 and glutamate 292.

This sequence belongs to the arginase family. As to quaternary structure, homotrimer. The cofactor is Mn(2+).

It catalyses the reaction L-arginine + H2O = urea + L-ornithine. It participates in nitrogen metabolism; urea cycle; L-ornithine and urea from L-arginine: step 1/1. The chain is Arginase (ARG) from Coccidioides posadasii (strain C735) (Valley fever fungus).